The primary structure comprises 422 residues: Serine hydroxymethyltransferase (422 aa).

Residues Leu113 and 117 to 119 contribute to the (6S)-5,6,7,8-tetrahydrofolate site; that span reads GHL. At Lys222 the chain carries N6-(pyridoxal phosphate)lysine.

Belongs to the SHMT family. As to quaternary structure, homodimer. Pyridoxal 5'-phosphate serves as cofactor.

It localises to the cytoplasm. It carries out the reaction (6R)-5,10-methylene-5,6,7,8-tetrahydrofolate + glycine + H2O = (6S)-5,6,7,8-tetrahydrofolate + L-serine. It participates in one-carbon metabolism; tetrahydrofolate interconversion. The protein operates within amino-acid biosynthesis; glycine biosynthesis; glycine from L-serine: step 1/1. Its function is as follows. Catalyzes the reversible interconversion of serine and glycine with tetrahydrofolate (THF) serving as the one-carbon carrier. This reaction serves as the major source of one-carbon groups required for the biosynthesis of purines, thymidylate, methionine, and other important biomolecules. Also exhibits THF-independent aldolase activity toward beta-hydroxyamino acids, producing glycine and aldehydes, via a retro-aldol mechanism. This is Serine hydroxymethyltransferase from Amoebophilus asiaticus (strain 5a2).